Here is a 999-residue protein sequence, read N- to C-terminus: Receptor-like protein kinase 5 (999 aa).

An N-terminal signal peptide occupies residues 1–14; sequence MLYCLILLLCLSST. The Extracellular portion of the chain corresponds to 15 to 621; that stretch reads YLPSLSLNQD…LCRKITRSKN (607 aa). LRR repeat units follow at residues 90–112, 115–137, 140–161, 164–186, and 188–208; these read SLHS…DFDT, NLIS…LPFN, NLKF…SFGE, KLES…LGNV, and TLKE…PSQL. N-linked (GlcNAc...) asparagine glycans are attached at residues Asn-98 and Asn-102. Asn-150 and Asn-185 each carry an N-linked (GlcNAc...) asparagine glycan. N-linked (GlcNAc...) asparagine glycosylation occurs at Asn-210. 2 LRR repeats span residues 213-236 and 237-259; these read ELQV…SRLT and SLVN…ITQL. N-linked (GlcNAc...) asparagine glycosylation is found at Asn-269 and Asn-282. LRR repeat units lie at residues 285-307, 308-330, 332-353, 356-378, 380-402, 404-427, 428-450, 452-474, 500-523, 524-546, 548-569, and 571-593; these read TLKR…LNLL, NLES…ITRS, TLSE…QLGA, PLQY…VCGE, KLEY…LGKC, SLTR…WGLP, RLSL…IIGA, NLSN…IGSL, QLSR…RGWK, NLNE…VGIL, VLNY…ELQN, and KLNV…YANK. Residue Asn-452 is glycosylated (N-linked (GlcNAc...) asparagine). Residue Asn-576 is glycosylated (N-linked (GlcNAc...) asparagine). Residues 622 to 641 form a helical membrane-spanning segment; sequence IGYVWILLTIFLLAGLVFVV. Residues 642-999 are Cytoplasmic-facing; the sequence is GIVMFIAKCR…PYYTEDLNSV (358 aa). The region spanning 683 to 968 is the Protein kinase domain; that stretch reads LDEKNVIGFG…KVVIMLQEVS (286 aa). ATP is bound by residues 689-697 and Lys-711; that span reads IGFGSSGKV. 2 positions are modified to phosphotyrosine: Tyr-766 and Tyr-806. The active-site Proton acceptor is Asp-819. Ser-856 bears the Phosphoserine mark. Phosphotyrosine is present on residues Tyr-864 and Tyr-871. Thr-872 is subject to Phosphothreonine. The interval 972–999 is disordered; it reads PCSSPNTSKRSKTGGKLSPYYTEDLNSV.

The protein belongs to the protein kinase superfamily. Ser/Thr protein kinase family. Interacts with CST. Binds to IDA. The cofactor is Mg(2+). Mn(2+) serves as cofactor. Autophosphorylated on Ser, Thr and Tyr residues. As to expression, expressed in roots and rosettes. Expressed at the base of petioles and pedicels, and in the abscission zones of the floral organs.

It localises to the cell membrane. The catalysed reaction is L-seryl-[protein] + ATP = O-phospho-L-seryl-[protein] + ADP + H(+). It carries out the reaction L-threonyl-[protein] + ATP = O-phospho-L-threonyl-[protein] + ADP + H(+). The enzyme catalyses L-tyrosyl-[protein] + ATP = O-phospho-L-tyrosyl-[protein] + ADP + H(+). Its function is as follows. Receptor with a dual specificity kinase activity acting on both serine/threonine- and tyrosine-containing substrates that controls floral organ abscission. May interact with the 'INFLORESCENCE DEFICIENT IN ABSCISSION' (IDA) ligands family. The chain is Receptor-like protein kinase 5 (RLK5) from Arabidopsis thaliana (Mouse-ear cress).